Reading from the N-terminus, the 347-residue chain is GMP reductase (347 aa).

108–131 contributes to the NADP(+) binding site; the sequence is ADFEKTKQILDLNPALNFVCIDVA. K(+)-binding residues include Gly181 and Gly183. The active-site Thioimidate intermediate is the Cys186. 216–239 lines the NADP(+) pocket; it reads IVSDGGCTTPGDVAKAFGGGADFV.

Belongs to the IMPDH/GMPR family. GuaC type 1 subfamily. Homotetramer.

The catalysed reaction is IMP + NH4(+) + NADP(+) = GMP + NADPH + 2 H(+). Catalyzes the irreversible NADPH-dependent deamination of GMP to IMP. It functions in the conversion of nucleobase, nucleoside and nucleotide derivatives of G to A nucleotides, and in maintaining the intracellular balance of A and G nucleotides. The polypeptide is GMP reductase (Shigella dysenteriae serotype 1 (strain Sd197)).